Reading from the N-terminus, the 340-residue chain is Peroxisomal coenzyme A diphosphatase 1, peroxisomal (340 aa).

A peroxisome-targeting transit peptide spans 1–7 (MILSQRR). The Nudix hydrolase domain maps to 37 to 199 (KRNSAVIILL…DEDVKSYQAE (163 aa)). Residues 77–99 (GKADYFQETFESVARREAEEEIG) carry the Nudix box motif. The Mg(2+) site is built by Glu-93 and Glu-97.

Belongs to the Nudix hydrolase family. PCD1 subfamily. It depends on Mn(2+) as a cofactor. Requires Mg(2+) as cofactor. The size of the cleaved transit peptide can be of 7 or 8 residues.

Its subcellular location is the peroxisome. The catalysed reaction is CoA + H2O = (R)-4'-phosphopantetheine + adenosine 3',5'-bisphosphate + 2 H(+). The enzyme catalyses CoA-disulfide + H2O = 4'-phosphopantetheinyl-CoA disulfide + adenosine 3',5'-bisphosphate + 2 H(+). It catalyses the reaction 8-oxo-dGTP + H2O = 8-oxo-dGMP + diphosphate + H(+). It carries out the reaction 2-oxo-dATP + H2O = 2-oxo-dAMP + diphosphate + H(+). Its function is as follows. Diphosphatase (pyrophosphatase) with specificity for coenzyme A and CoA derivatives. Catalyzes the hydrolysis of the diphosphate linkage in CoA to give 3',5'-ADP and 4'-phosphopantetheine. Prefers oxidized CoA disulfide (CoASSCoA) over CoA as a substrate. May be required to remove potentially toxic oxidized CoA disulfide from peroxisomes to maintain the capacity for beta-oxidation of fatty acids. Can also hydrolyze 8-oxo-dGTP and 2-OH-dATP in vitro; therefore it may function as a sanitizing enzyme for oxidized nucleotides and may contribute to prevention of spontaneous mutagenesis due to the misincorporation of these oxidized nucleotides during DNA synthesis. Shows moderate activity in vitro with several short chain acyl-CoA esters and very low activity on 3'-dephospho-CoA while is not active with (deoxy)nucleoside 5'-triphosphates, nucleoside 5'-di- or monophosphates, diadenosine polyphosphates, nucleoside 5'-diphosphosugars, cytidine 5'-diphosphoalcohols, NAD(+), NADH, or FAD. This is Peroxisomal coenzyme A diphosphatase 1, peroxisomal (PCD1) from Saccharomyces cerevisiae (strain ATCC 204508 / S288c) (Baker's yeast).